The following is a 103-amino-acid chain: Small ribosomal subunit protein uS10 (103 aa).

This sequence belongs to the universal ribosomal protein uS10 family. Part of the 30S ribosomal subunit.

Functionally, involved in the binding of tRNA to the ribosomes. The protein is Small ribosomal subunit protein uS10 of Helicobacter hepaticus (strain ATCC 51449 / 3B1).